The sequence spans 366 residues: Dihydroorotate dehydrogenase (quinone) (366 aa).

Residues 74–78 and threonine 98 contribute to the FMN site; that span reads AGFDK. Lysine 78 contributes to the substrate binding site. 123–127 is a binding site for substrate; sequence NRMGF. FMN is bound by residues asparagine 156 and asparagine 189. Asparagine 189 serves as a coordination point for substrate. Serine 192 serves as the catalytic Nucleophile. Asparagine 194 contributes to the substrate binding site. Positions 231 and 259 each coordinate FMN. A substrate-binding site is contributed by 260 to 261; the sequence is NT. FMN contacts are provided by residues glycine 285, glycine 314, and 335-336; that span reads YT.

Belongs to the dihydroorotate dehydrogenase family. Type 2 subfamily. Monomer. FMN serves as cofactor.

It is found in the cell membrane. The catalysed reaction is (S)-dihydroorotate + a quinone = orotate + a quinol. The protein operates within pyrimidine metabolism; UMP biosynthesis via de novo pathway; orotate from (S)-dihydroorotate (quinone route): step 1/1. Catalyzes the conversion of dihydroorotate to orotate with quinone as electron acceptor. The sequence is that of Dihydroorotate dehydrogenase (quinone) from Kineococcus radiotolerans (strain ATCC BAA-149 / DSM 14245 / SRS30216).